The following is a 332-amino-acid chain: Probable isoaspartyl peptidase/L-asparaginase CG7860 (332 aa).

Thr-188 functions as the Nucleophile in the catalytic mechanism. Substrate contacts are provided by residues 216–219 (RIGD) and 239–242 (TGHG).

The protein belongs to the Ntn-hydrolase family. In terms of assembly, heterodimer of an alpha and beta chain produced by autocleavage. In terms of processing, cleaved into an alpha and beta chain by autocatalysis; this activates the enzyme. The N-terminal residue of the beta subunit is responsible for the nucleophile hydrolase activity.

It catalyses the reaction L-asparagine + H2O = L-aspartate + NH4(+). The catalysed reaction is Cleavage of a beta-linked Asp residue from the N-terminus of a polypeptide.. In terms of biological role, has both L-asparaginase and beta-aspartyl peptidase activity. Does not have aspartylglucosaminidase activity and is inactive toward GlcNAc-L-Asn. Likewise, has no activity toward glutamine. The protein is Probable isoaspartyl peptidase/L-asparaginase CG7860 of Drosophila melanogaster (Fruit fly).